The sequence spans 899 residues: Probable dipeptidyl-aminopeptidase B (899 aa).

The interval 1–69 (MKLDRMRVGS…NHNGRTQGNY (69 aa)) is disordered. Over 1-99 (MKLDRMRVGS…NGKSSQRRTL (99 aa)) the chain is Cytoplasmic. Positions 32–43 (DSSSTASISLTL) are enriched in low complexity. Residues 100-120 (IVFWLLVALCVGGWAVAFLFF) form a helical; Signal-anchor for type II membrane protein membrane-spanning segment. Over 121 to 899 (VTSPGNKTST…KYFNLSFLGH (779 aa)) the chain is Vacuolar. The segment covering 128-139 (TSTSPHSGSNSP) has biased composition (polar residues). Residues 128–149 (TSTSPHSGSNSPEGDVTKPGIP) are disordered. N-linked (GlcNAc...) asparagine glycans are attached at residues Asn212, Asn308, and Asn360. Ser765 acts as the Charge relay system in catalysis. N-linked (GlcNAc...) asparagine glycosylation is found at Asn819, Asn824, and Asn827. Residues Asp842 and His875 each act as charge relay system in the active site. A glycan (N-linked (GlcNAc...) asparagine) is linked at Asn893.

Belongs to the peptidase S9B family.

It is found in the vacuole membrane. The catalysed reaction is Release of an N-terminal dipeptide, Xaa-Yaa-|-Zaa-, from a polypeptide, preferentially when Yaa is Pro, provided Zaa is neither Pro nor hydroxyproline.. In terms of biological role, type IV dipeptidyl-peptidase which removes N-terminal dipeptides sequentially from polypeptides having unsubstituted N-termini provided that the penultimate residue is proline. This chain is Probable dipeptidyl-aminopeptidase B (DAPB), found in Trichophyton verrucosum (strain HKI 0517).